A 187-amino-acid polypeptide reads, in one-letter code: Cytochrome b-245 chaperone 1 (187 aa).

Residues 20 to 42 (GIRSWSLLVGILSIGLAAAYYSG) form a helical membrane-spanning segment. At serine 168 the chain carries Phosphoserine.

The protein belongs to the CYBC1 family. As to quaternary structure, interacts with CYBB; CYBC1 may act as a chaperone stabilizing Cytochrome b-245 heterodimer.

The protein localises to the endoplasmic reticulum membrane. Functions as a chaperone necessary for a stable expression of the CYBA and CYBB subunits of the cytochrome b-245 heterodimer. Controls the phagocyte respiratory burst and is essential for innate immunity. In Bos taurus (Bovine), this protein is Cytochrome b-245 chaperone 1.